The following is a 363-amino-acid chain: Peptide chain release factor 1 (363 aa).

Position 237 is an N5-methylglutamine (Gln-237). Over residues 286 to 295 (EKRRSAEATT) the composition is skewed to basic and acidic residues. The segment at 286–305 (EKRRSAEATTRRNLVGSGDR) is disordered.

Belongs to the prokaryotic/mitochondrial release factor family. Post-translationally, methylated by PrmC. Methylation increases the termination efficiency of RF1.

It is found in the cytoplasm. Functionally, peptide chain release factor 1 directs the termination of translation in response to the peptide chain termination codons UAG and UAA. The polypeptide is Peptide chain release factor 1 (Shewanella amazonensis (strain ATCC BAA-1098 / SB2B)).